The chain runs to 262 residues: Tetratricopeptide repeat protein 33 (262 aa).

The disordered stretch occupies residues A17–K63. TPR repeat units lie at residues S59–D92, A93–S126, and W127–N160. S197 is subject to Phosphoserine.

The polypeptide is Tetratricopeptide repeat protein 33 (Ttc33) (Mus musculus (Mouse)).